The chain runs to 299 residues: HTH-type transcriptional regulator ArgP (299 aa).

An HTH lysR-type domain is found at 4-60; the sequence is PDYRALQALDAVIRERGFERAAQKLCITQSAVSQRIKQLENLFGQPLLVRTVPPQPT. Residues 21 to 40 constitute a DNA-binding region (H-T-H motif); the sequence is FERAAQKLCITQSAVSQRIK.

It belongs to the LysR transcriptional regulatory family. Homodimer.

Controls the transcription of genes involved in arginine and lysine metabolism. In Proteus mirabilis (strain HI4320), this protein is HTH-type transcriptional regulator ArgP.